Reading from the N-terminus, the 464-residue chain is Protein transport protein HofB homolog (464 aa).

264–271 (GPTGSGKS) serves as a coordination point for ATP.

Belongs to the GSP E family.

In Haemophilus influenzae (strain ATCC 51907 / DSM 11121 / KW20 / Rd), this protein is Protein transport protein HofB homolog (hofB).